A 62-amino-acid polypeptide reads, in one-letter code: Large ribosomal subunit protein bL33 (62 aa).

Belongs to the bacterial ribosomal protein bL33 family.

The chain is Large ribosomal subunit protein bL33 from Acaryochloris marina (strain MBIC 11017).